A 198-amino-acid polypeptide reads, in one-letter code: MTLVTQKAPNFIAPAILKNGKIMNNFDLKKYSNGQITVLFFWPMDFTFVCPSEIIEFNKTFEAFEKRNVKIVGVSIDSVFVHQAWQNTFPENGGIGKIKFPMVSDIKHEIQKSYHIEHPELNIALRASFLIDENWIIRHQVVNDLPFGRNIDEMIRMIDALNFHNKYGEVCPVNWKHGQEGMKASQEGVSSYLKKYFS.

The region spanning 2–163 (TLVTQKAPNF…MIRMIDALNF (162 aa)) is the Thioredoxin domain. The active-site Cysteine sulfenic acid (-SOH) intermediate is the Cys-50.

It belongs to the peroxiredoxin family. AhpC/Prx1 subfamily. As to quaternary structure, homodimer; disulfide-linked, upon oxidation. 5 homodimers assemble to form a ring-like decamer.

It is found in the cytoplasm. The catalysed reaction is a hydroperoxide + NADH + H(+) = an alcohol + NAD(+) + H2O. Its function is as follows. Thiol-specific peroxidase that catalyzes the reduction of hydrogen peroxide and organic hydroperoxides to water and alcohols, respectively. Plays a role in cell protection against oxidative stress by detoxifying peroxides. The chain is Alkyl hydroperoxide reductase C from Buchnera aphidicola subsp. Schizaphis graminum (strain Sg).